Consider the following 476-residue polypeptide: Bifunctional protein HldE (476 aa).

The segment at 1–319 is ribokinase; it reads MKVTLPAFEK…EALKSHQGES (319 aa). 195-198 is a binding site for ATP; sequence NMSE. Residue Asp264 is part of the active site. The tract at residues 345 to 476 is cytidylyltransferase; the sequence is MTNGCFDILH…AIIQNIMSRH (132 aa).

The protein in the N-terminal section; belongs to the carbohydrate kinase PfkB family. This sequence in the C-terminal section; belongs to the cytidylyltransferase family. Homodimer.

It catalyses the reaction D-glycero-beta-D-manno-heptose 7-phosphate + ATP = D-glycero-beta-D-manno-heptose 1,7-bisphosphate + ADP + H(+). It carries out the reaction D-glycero-beta-D-manno-heptose 1-phosphate + ATP + H(+) = ADP-D-glycero-beta-D-manno-heptose + diphosphate. It participates in nucleotide-sugar biosynthesis; ADP-L-glycero-beta-D-manno-heptose biosynthesis; ADP-L-glycero-beta-D-manno-heptose from D-glycero-beta-D-manno-heptose 7-phosphate: step 1/4. It functions in the pathway nucleotide-sugar biosynthesis; ADP-L-glycero-beta-D-manno-heptose biosynthesis; ADP-L-glycero-beta-D-manno-heptose from D-glycero-beta-D-manno-heptose 7-phosphate: step 3/4. Its function is as follows. Catalyzes the phosphorylation of D-glycero-D-manno-heptose 7-phosphate at the C-1 position to selectively form D-glycero-beta-D-manno-heptose-1,7-bisphosphate. Catalyzes the ADP transfer from ATP to D-glycero-beta-D-manno-heptose 1-phosphate, yielding ADP-D-glycero-beta-D-manno-heptose. The sequence is that of Bifunctional protein HldE from Shewanella amazonensis (strain ATCC BAA-1098 / SB2B).